We begin with the raw amino-acid sequence, 239 residues long: Type III pantothenate kinase (239 aa).

Residue 6–13 (DAGNTRLK) coordinates ATP. Substrate contacts are provided by residues Tyr87 and 94 to 97 (GADR). The Proton acceptor role is filled by Asp96. ATP is bound at residue Thr119. Ser169 contributes to the substrate binding site.

This sequence belongs to the type III pantothenate kinase family. In terms of assembly, homodimer. It depends on NH4(+) as a cofactor. Requires K(+) as cofactor.

The protein resides in the cytoplasm. The catalysed reaction is (R)-pantothenate + ATP = (R)-4'-phosphopantothenate + ADP + H(+). It functions in the pathway cofactor biosynthesis; coenzyme A biosynthesis; CoA from (R)-pantothenate: step 1/5. Its function is as follows. Catalyzes the phosphorylation of pantothenate (Pan), the first step in CoA biosynthesis. The protein is Type III pantothenate kinase of Laribacter hongkongensis (strain HLHK9).